We begin with the raw amino-acid sequence, 387 residues long: Phosphoglycerate kinase (387 aa).

Substrate is bound by residues 21–23, Arg36, 59–62, Arg113, and Arg146; these read DLN and HLGR. ATP is bound by residues Lys197, Glu314, and 340 to 343; that span reads GGDT.

This sequence belongs to the phosphoglycerate kinase family. In terms of assembly, monomer.

The protein resides in the cytoplasm. The catalysed reaction is (2R)-3-phosphoglycerate + ATP = (2R)-3-phospho-glyceroyl phosphate + ADP. It functions in the pathway carbohydrate degradation; glycolysis; pyruvate from D-glyceraldehyde 3-phosphate: step 2/5. In Photorhabdus laumondii subsp. laumondii (strain DSM 15139 / CIP 105565 / TT01) (Photorhabdus luminescens subsp. laumondii), this protein is Phosphoglycerate kinase.